The primary structure comprises 479 residues: UDP-glucose flavonoid 3-O-glucosyltransferase 6 (479 aa).

Residue His17 is the Proton acceptor of the active site. Position 17 (His17) interacts with an anthocyanidin. Asp121 serves as the catalytic Charge relay. Thr143, Ala354, Gln356, His371, Trp374, Asn375, Ser376, and Glu379 together coordinate UDP-alpha-D-glucose. Ala394 contributes to the an anthocyanidin binding site. Residues Glu395 and Gln396 each coordinate UDP-alpha-D-glucose. The disordered stretch occupies residues 454-479; it reads MSRKALEEDGSSYSSLGRFLDQIQTS.

The protein belongs to the UDP-glycosyltransferase family. As to expression, strongly expressed in achenes, with lower expression levels detected in receptacles.

It catalyses the reaction a flavonol + UDP-alpha-D-glucose = a flavonol 3-O-beta-D-glucoside + UDP + H(+). Functionally, broad spectrum multifunctional glucosyltransferase. Catalyzes the formation of flavonol 3-O-glucosides during fruit ripening. Accepted substrates include several flavonoids, hydroxycoumarins and beta-naphthols. Uses UDP-Glc as a sugar donor, but not UDP-Gal or UDP-GlcUA. May also be involved in detoxification of xenobiotics. The protein is UDP-glucose flavonoid 3-O-glucosyltransferase 6 of Fragaria ananassa (Strawberry).